Here is a 216-residue protein sequence, read N- to C-terminus: Pyridoxine/pyridoxamine 5'-phosphate oxidase (216 aa).

Residues 12 to 15 (RREY) and K70 contribute to the substrate site. FMN-binding positions include 65–70 (RVVLLK), 80–81 (YT), R86, K87, and Q109. Substrate is bound by residues Y127 and R131. FMN contacts are provided by residues 144–145 (QS) and W189. 195–197 (RLH) lines the substrate pocket. Residue R199 coordinates FMN.

This sequence belongs to the pyridoxamine 5'-phosphate oxidase family. Homodimer. Requires FMN as cofactor.

The enzyme catalyses pyridoxamine 5'-phosphate + O2 + H2O = pyridoxal 5'-phosphate + H2O2 + NH4(+). The catalysed reaction is pyridoxine 5'-phosphate + O2 = pyridoxal 5'-phosphate + H2O2. It functions in the pathway cofactor metabolism; pyridoxal 5'-phosphate salvage; pyridoxal 5'-phosphate from pyridoxamine 5'-phosphate: step 1/1. Its pathway is cofactor metabolism; pyridoxal 5'-phosphate salvage; pyridoxal 5'-phosphate from pyridoxine 5'-phosphate: step 1/1. Functionally, catalyzes the oxidation of either pyridoxine 5'-phosphate (PNP) or pyridoxamine 5'-phosphate (PMP) into pyridoxal 5'-phosphate (PLP). This chain is Pyridoxine/pyridoxamine 5'-phosphate oxidase, found in Blochmanniella pennsylvanica (strain BPEN).